Here is a 211-residue protein sequence, read N- to C-terminus: ATP-dependent dethiobiotin synthetase BioD (211 aa).

10-15 (GIGKTY) contacts ATP. Residue Thr-14 coordinates Mg(2+). Residue Lys-35 is part of the active site. Ser-39 serves as a coordination point for substrate. ATP-binding positions include Asp-44, 105–108 (EGAG), and 165–166 (NC). The Mg(2+) site is built by Asp-44 and Glu-105.

The protein belongs to the dethiobiotin synthetase family. Homodimer. Mg(2+) is required as a cofactor.

Its subcellular location is the cytoplasm. The enzyme catalyses (7R,8S)-7,8-diammoniononanoate + CO2 + ATP = (4R,5S)-dethiobiotin + ADP + phosphate + 3 H(+). It functions in the pathway cofactor biosynthesis; biotin biosynthesis; biotin from 7,8-diaminononanoate: step 1/2. Its function is as follows. Catalyzes a mechanistically unusual reaction, the ATP-dependent insertion of CO2 between the N7 and N8 nitrogen atoms of 7,8-diaminopelargonic acid (DAPA, also called 7,8-diammoniononanoate) to form a ureido ring. The chain is ATP-dependent dethiobiotin synthetase BioD from Methanococcus vannielii (strain ATCC 35089 / DSM 1224 / JCM 13029 / OCM 148 / SB).